Consider the following 241-residue polypeptide: Ras-like protein 1 (241 aa).

GTP is bound by residues G17–A22, V33–T39, A63–G64, N138–D141, and S168–K170. The short motif at Y36 to Y44 is the Effector region element. Residues R190 to L241 are disordered. The span at Q191 to K205 shows a compositional bias: polar residues. Over residues D219–K230 the composition is skewed to basic and acidic residues. A Cysteine methyl ester modification is found at C238. C238 carries S-farnesyl cysteine lipidation. The propeptide at V239–L241 is removed in mature form.

It belongs to the small GTPase superfamily. Ras family. As to quaternary structure, interacts with farnesyltransferase beta subunit RAM1.

The protein localises to the cell membrane. Alternates between an inactive form bound to GDP and an active form bound to GTP. Activated by a guanine nucleotide-exchange factor (GEF) and inactivated by a GTPase-activating protein (GAP). Functionally, modulates the activity of the adenylate cyclase catalytic subunit and therefore affects the biosynthesis of cyclic-AMP. Plays a role in both surface attachment and surface recognition of appressoria, a highly specialized infection structure for plant penetration. Regulates appressorium formation by coordinated regulation of cAMP signaling and Pmk1 MAPK pathways. The polypeptide is Ras-like protein 1 (Pyricularia oryzae (strain 70-15 / ATCC MYA-4617 / FGSC 8958) (Rice blast fungus)).